A 530-amino-acid polypeptide reads, in one-letter code: Histone-arginine methyltransferase CARMER (530 aa).

One can recognise an SAM-dependent MTase PRMT-type domain in the interval 141–450 (ASQYFQFYGY…QSYDVTIDLH (310 aa)). Residues glutamine 154, arginine 163, glycine 187, glutamate 209, glutamate 238, and threonine 266 each coordinate S-adenosyl-L-methionine. Residue arginine 501 is modified to Asymmetric dimethylarginine; by autocatalysis.

It belongs to the class I-like SAM-binding methyltransferase superfamily. Protein arginine N-methyltransferase family. Homodimer. The dimethylated protein is the major form.

The protein resides in the cytoplasm. The protein localises to the nucleus. It carries out the reaction L-arginyl-[protein] + 2 S-adenosyl-L-methionine = N(omega),N(omega)-dimethyl-L-arginyl-[protein] + 2 S-adenosyl-L-homocysteine + 2 H(+). Functionally, methylates (mono- and asymmetric dimethylation) the guanidino nitrogens of arginyl residues in proteins. May methylate histone H3 at 'Arg-17' and activate transcription via chromatin remodeling. In Drosophila sechellia (Fruit fly), this protein is Histone-arginine methyltransferase CARMER (Art4).